The primary structure comprises 271 residues: Elongation factor Ts (271 aa).

An involved in Mg(2+) ion dislocation from EF-Tu region spans residues 76–79; it reads TDFV.

The protein belongs to the EF-Ts family.

The protein resides in the cytoplasm. Its function is as follows. Associates with the EF-Tu.GDP complex and induces the exchange of GDP to GTP. It remains bound to the aminoacyl-tRNA.EF-Tu.GTP complex up to the GTP hydrolysis stage on the ribosome. The chain is Elongation factor Ts from Mycobacterium tuberculosis (strain ATCC 25177 / H37Ra).